A 102-amino-acid chain; its full sequence is Small ribosomal subunit protein uS10 (102 aa).

Belongs to the universal ribosomal protein uS10 family. As to quaternary structure, part of the 30S ribosomal subunit.

Its function is as follows. Involved in the binding of tRNA to the ribosomes. This Methylocella silvestris (strain DSM 15510 / CIP 108128 / LMG 27833 / NCIMB 13906 / BL2) protein is Small ribosomal subunit protein uS10.